The primary structure comprises 43 residues: Probable intron-encoded DNA endonuclease 2 (43 aa).

This sequence belongs to the LAGLIDADG endonuclease family.

Its subcellular location is the mitochondrion. Functionally, mitochondrial DNA endonuclease involved in intron homing. This is Probable intron-encoded DNA endonuclease 2 (hegI2) from Mycosarcoma maydis (Corn smut fungus).